The following is a 277-amino-acid chain: NH(3)-dependent NAD(+) synthetase (277 aa).

Residue 36–43 (GLSGGIDS) participates in ATP binding. Residue D42 participates in Mg(2+) binding. R118 lines the deamido-NAD(+) pocket. An ATP-binding site is contributed by T138. Position 143 (E143) interacts with Mg(2+). K167 and S189 together coordinate ATP.

This sequence belongs to the NAD synthetase family. As to quaternary structure, homodimer.

The catalysed reaction is deamido-NAD(+) + NH4(+) + ATP = AMP + diphosphate + NAD(+) + H(+). Its pathway is cofactor biosynthesis; NAD(+) biosynthesis; NAD(+) from deamido-NAD(+) (ammonia route): step 1/1. Functionally, catalyzes the ATP-dependent amidation of deamido-NAD to form NAD. Uses ammonia as a nitrogen source. This chain is NH(3)-dependent NAD(+) synthetase, found in Chlorobium phaeovibrioides (strain DSM 265 / 1930) (Prosthecochloris vibrioformis (strain DSM 265)).